Reading from the N-terminus, the 184-residue chain is Probable archaeosortase E (184 aa).

The next 4 helical transmembrane spans lie at 27 to 47 (ILFL…LSYF), 86 to 106 (VVEE…IIVY), 114 to 134 (IIGI…IVLI), and 151 to 171 (IAGY…YLKI). Residue cysteine 90 is the Acyl-thioester intermediate of the active site. The Proton donor role is filled by arginine 130.

Belongs to the exosortase/archaeosortase family. Archaeosortase E subfamily.

The protein localises to the cell membrane. In terms of biological role, transpeptidase that recognizes and modifies its substrate by proteolytic cleavage of a sorting signal. Following cleavage, a covalent intermediate is formed via a thioester bond between the archaeosortase and its substrate, which is then transferred and covalently attached to the cell membrane. In Methanocaldococcus jannaschii (strain ATCC 43067 / DSM 2661 / JAL-1 / JCM 10045 / NBRC 100440) (Methanococcus jannaschii), this protein is Probable archaeosortase E.